The primary structure comprises 314 residues: Chitinase 1 (314 aa).

Positions 1 to 26 (MASVSPSSLLLLFFALLSPLLPLTSA) are cleaved as a signal peptide. A GH18 domain is found at 27–296 (LVFREYIGSQ…NVFRYEMQAQ (270 aa)). Glu151 (proton donor) is an active-site residue.

The protein belongs to the glycosyl hydrolase 18 family. Chitinase class II subfamily.

The catalysed reaction is Random endo-hydrolysis of N-acetyl-beta-D-glucosaminide (1-&gt;4)-beta-linkages in chitin and chitodextrins.. Able to cleave glycolchitin. The polypeptide is Chitinase 1 (Tulipa saxatilis subsp. bakeri (Tulip)).